Consider the following 246-residue polypeptide: UDP-N-acetyl-D-mannosaminuronic acid transferase (246 aa).

The protein belongs to the glycosyltransferase 26 family.

The enzyme catalyses UDP-N-acetyl-alpha-D-mannosaminouronate + N-acetyl-alpha-D-glucosaminyl-di-trans,octa-cis-undecaprenyl diphosphate = beta-D-ManNAcA-(1-&gt;4)-alpha-D-GlcNAc-di-trans,octa-cis-undecaprenyl diphosphate + UDP + H(+). It functions in the pathway bacterial outer membrane biogenesis; enterobacterial common antigen biosynthesis. Its function is as follows. Catalyzes the synthesis of Und-PP-GlcNAc-ManNAcA (Lipid II), the second lipid-linked intermediate involved in enterobacterial common antigen (ECA) synthesis. The polypeptide is UDP-N-acetyl-D-mannosaminuronic acid transferase (Yersinia pseudotuberculosis serotype IB (strain PB1/+)).